A 212-amino-acid polypeptide reads, in one-letter code: MDPKCSLILLSGGKGERFGANQPKQYLPFQGEPLILHALKTALHIPEITEVIVVCDVSYRHIFEGFPVKFAESGKRRQDSVFSGLQHVSNPWVLIHDGVRPFIYPDEVTELIAVAQQTGAATLVSNVPYTIKQRHPVKTLDRDALSIVHTPQCVKTEILSAGLEFASREGITLVDDTQAAELLDIPVSLVSSKHPQIKITYPEDLTIAHALL.

It belongs to the IspD/TarI cytidylyltransferase family. IspD subfamily.

It carries out the reaction 2-C-methyl-D-erythritol 4-phosphate + CTP + H(+) = 4-CDP-2-C-methyl-D-erythritol + diphosphate. It participates in isoprenoid biosynthesis; isopentenyl diphosphate biosynthesis via DXP pathway; isopentenyl diphosphate from 1-deoxy-D-xylulose 5-phosphate: step 2/6. In terms of biological role, catalyzes the formation of 4-diphosphocytidyl-2-C-methyl-D-erythritol from CTP and 2-C-methyl-D-erythritol 4-phosphate (MEP). This Chlamydia caviae (strain ATCC VR-813 / DSM 19441 / 03DC25 / GPIC) (Chlamydophila caviae) protein is 2-C-methyl-D-erythritol 4-phosphate cytidylyltransferase.